Here is a 93-residue protein sequence, read N- to C-terminus: Large ribosomal subunit protein eL42 (93 aa).

The Zn(2+) site is built by C11 and C14. The C4-type zinc-finger motif lies at 11–75 (CPNCDEHHQL…TDLKYRCSEC (65 aa)). A disordered region spans residues 24–62 (KVRSGRSSGMKWDARRTKRANASIGNHGRFSKVPVGNKP). Zn(2+)-binding residues include C72 and C75.

The protein belongs to the eukaryotic ribosomal protein eL42 family. As to quaternary structure, part of the 50S ribosomal subunit. Zn(2+) serves as cofactor.

Its function is as follows. Binds to the 23S rRNA. The sequence is that of Large ribosomal subunit protein eL42 from Halobacterium salinarum (strain ATCC 700922 / JCM 11081 / NRC-1) (Halobacterium halobium).